The sequence spans 428 residues: Enolase (428 aa).

Position 163 (Gln-163) interacts with (2R)-2-phosphoglycerate. Catalysis depends on Glu-205, which acts as the Proton donor. Residues Asp-242, Glu-285, and Asp-312 each coordinate Mg(2+). (2R)-2-phosphoglycerate contacts are provided by Lys-337, Arg-366, Ser-367, and Lys-388. Lys-337 acts as the Proton acceptor in catalysis.

The protein belongs to the enolase family. The cofactor is Mg(2+).

The protein resides in the cytoplasm. It is found in the secreted. Its subcellular location is the cell surface. It catalyses the reaction (2R)-2-phosphoglycerate = phosphoenolpyruvate + H2O. It functions in the pathway carbohydrate degradation; glycolysis; pyruvate from D-glyceraldehyde 3-phosphate: step 4/5. In terms of biological role, catalyzes the reversible conversion of 2-phosphoglycerate (2-PG) into phosphoenolpyruvate (PEP). It is essential for the degradation of carbohydrates via glycolysis. This is Enolase from Neisseria meningitidis serogroup A / serotype 4A (strain DSM 15465 / Z2491).